The sequence spans 427 residues: Homoprotocatechuate catabolism bifunctional isomerase/decarboxylase (427 aa).

Approximate repeat units lie at residues 1 to 202 and 203 to 405; these read MKGT…LENP and VVDE…VGDE. The a divalent metal cation site is built by E276, E278, and D307.

The protein belongs to the FAH family. In terms of assembly, monomer. The cofactor is Mg(2+).

It catalyses the reaction (2E,4Z)-5-hydroxypenta-2,4-diene-1,2,5-tricarboxylate = (3E,5R)-5-carboxy-2-oxohept-3-enedioate. The enzyme catalyses (3E,5R)-5-carboxy-2-oxohept-3-enedioate + H(+) = (4Z)-2-oxohept-4-enedioate + CO2. It participates in aromatic compound metabolism; 4-hydroxyphenylacetate degradation; pyruvate and succinate semialdehyde from 4-hydroxyphenylacetate: step 4/7. Its pathway is aromatic compound metabolism; 4-hydroxyphenylacetate degradation; pyruvate and succinate semialdehyde from 4-hydroxyphenylacetate: step 5/7. Functionally, decarboxylates OPET (5-oxo-pent-3-ene-1,2,5-tricarboxylic acid) into HHDD (2-hydroxy-hept-2,4-diene-1,7-dioate) and isomerizes it to OHED (2-oxo-hept-3-ene-1,7-dioate). In Escherichia coli, this protein is Homoprotocatechuate catabolism bifunctional isomerase/decarboxylase (hpcE).